Consider the following 361-residue polypeptide: Pyruvate dehydrogenase E1 component subunit beta, mitochondrial (361 aa).

A mitochondrion-targeting transit peptide spans 1 to 27 (MAVNGCMRLLRNGLTSACALEQSVRRL). Glu90 provides a ligand contact to thiamine diphosphate. 5 residues coordinate K(+): Ile143, Ala191, Val192, Asp194, and Asn196.

As to quaternary structure, heterotetramer of two PDHA1 and two PDHB subunits. The heterotetramer interacts with DLAT, and is part of the multimeric pyruvate dehydrogenase complex that contains multiple copies of pyruvate dehydrogenase (E1), dihydrolipoamide acetyltransferase (DLAT, E2) and lipoamide dehydrogenase (DLD, E3). It depends on thiamine diphosphate as a cofactor.

It is found in the mitochondrion matrix. It carries out the reaction N(6)-[(R)-lipoyl]-L-lysyl-[protein] + pyruvate + H(+) = N(6)-[(R)-S(8)-acetyldihydrolipoyl]-L-lysyl-[protein] + CO2. Functionally, the pyruvate dehydrogenase complex catalyzes the overall conversion of pyruvate to acetyl-CoA and CO(2), and thereby links the glycolytic pathway to the tricarboxylic cycle. The polypeptide is Pyruvate dehydrogenase E1 component subunit beta, mitochondrial (Ascaris suum (Pig roundworm)).